Here is a 374-residue protein sequence, read N- to C-terminus: tRNA-specific 2-thiouridylase MnmA (374 aa).

Residues 17–24 and Met-43 each bind ATP; that span reads GMSGGVDS. The interaction with target base in tRNA stretch occupies residues 103–105; it reads NPD. The active-site Nucleophile is the Cys-108. The cysteines at positions 108 and 204 are disulfide-linked. Residue Gly-132 coordinates ATP. The segment at 154–156 is interaction with tRNA; the sequence is KDQ. Catalysis depends on Cys-204, which acts as the Cysteine persulfide intermediate. An interaction with tRNA region spans residues 316–317; that stretch reads RY.

It belongs to the MnmA/TRMU family.

It is found in the cytoplasm. The enzyme catalyses S-sulfanyl-L-cysteinyl-[protein] + uridine(34) in tRNA + AH2 + ATP = 2-thiouridine(34) in tRNA + L-cysteinyl-[protein] + A + AMP + diphosphate + H(+). Its function is as follows. Catalyzes the 2-thiolation of uridine at the wobble position (U34) of tRNA, leading to the formation of s(2)U34. The sequence is that of tRNA-specific 2-thiouridylase MnmA from Pseudomonas putida (strain W619).